The sequence spans 325 residues: Heat-inducible transcription repressor HrcA (325 aa).

The protein belongs to the HrcA family.

In terms of biological role, negative regulator of class I heat shock genes (grpE-dnaK-dnaJ and groELS operons). Prevents heat-shock induction of these operons. The polypeptide is Heat-inducible transcription repressor HrcA (Staphylococcus aureus (strain bovine RF122 / ET3-1)).